The chain runs to 111 residues: uncharacterized protein (111 aa).

Residues 3–29 (RKITSYKTSLQGLREENEDVELMNLNL) are a coiled coil. The PPM-type phosphatase domain occupies 6–111 (TSYKTSLQGL…TWWMYCSSYY (106 aa)).

This is an uncharacterized protein from Acanthamoeba polyphaga mimivirus (APMV).